A 651-amino-acid chain; its full sequence is Meiotic expression up-regulated protein 6 (651 aa).

Basic and acidic residues-rich tracts occupy residues 1–12 and 21–30; these read MSYEGREERPEQ and VSEHNEHDSG. Positions 1–102 are disordered; that stretch reads MSYEGREERP…EKKSKKKAKD (102 aa). Over residues 72-83 the composition is skewed to acidic residues; that stretch reads TVDNIDPADDDP. The span at 90-102 shows a compositional bias: basic and acidic residues; it reads KVEEKKSKKKAKD. One can recognise a PH domain in the interval 194-261; that stretch reads CRGLLFYSKS…WITDLKNAIA (68 aa). Disordered stretches follow at residues 365 to 430, 468 to 514, and 587 to 630; these read TVEA…GTPI, VATP…KGGN, and TIKP…QMPQ. Composition is skewed to polar residues over residues 410–429 and 478–490; these read ESTSTQNVEQASTQNDNGTP and PSTAATNEESVVS. A compositionally biased stretch (basic residues) spans 497–514; that stretch reads KKAGKKHHRHHKKKKGGN. Low complexity predominate over residues 587–604; it reads TIKPETPLTPTTTPTPRT.

This chain is Meiotic expression up-regulated protein 6 (meu6), found in Schizosaccharomyces pombe (strain 972 / ATCC 24843) (Fission yeast).